The primary structure comprises 597 residues: MTFTPSLNSGLAVYRRLLSYTRPYRWIFAASIITMAIYAATETGLAALMKPLMDGSFIERDPATIQIIPLLLIGLFVIRGGANFITQYGLKWVARRVVRDLREQMFCHLLALPARYYDQKASGQLLAKLIYDVEQVSNAATDAILTIIRDSLTILGLLAWMAYLNGLLTLIILVTAPLIALIIWWVSHRFRRISRKIQNSMGDVSQVAQETIEGHREVKIFGGQTYEAERFDQVNEQNRRQTMKMAATDAISQPVVQLIAVLGLAGVIHLATRESMLAQISVGTFISFITAMMLLLGPVKRLTKINGTLQRGIAAAQSIFGLLAETPEADRGQQSLRRARGAIRFEHLSFCYEPAKGPVLENIDLEIKPYQTIALVGHSGSGKSTLVSLLARFYETTSGRILIDEMDIQTLRLTELRRQIALVSQQIILFNDTIAHNIAYGSYQQTSKQDIIRAAEAAHAMEFINRLPDGLDTVIGEKGVLLSGGQRQRLAIARALLKDAPILILDEATASLDTEAERHIQAALETLMRQRTTLVIAHRLSTVENADQIIVLHQGQIIERGTHSQLLARESHYAGLYRLQFRHSHEHVSPLSANVGL.

6 helical membrane passes run 26-46 (WIFAASIITMAIYAATETGLA), 65-85 (IQIIPLLLIGLFVIRGGANFI), 144-164 (ILTIIRDSLTILGLLAWMAYL), 166-186 (GLLTLIILVTAPLIALIIWWV), 250-270 (AISQPVVQLIAVLGLAGVIHL), and 276-296 (MLAQISVGTFISFITAMMLLL). The ABC transmembrane type-1 domain maps to 29-311 (AASIITMAIY…LTKINGTLQR (283 aa)). Positions 343-579 (IRFEHLSFCY…ESHYAGLYRL (237 aa)) constitute an ABC transporter domain. An ATP-binding site is contributed by 377 to 384 (GHSGSGKS).

The protein belongs to the ABC transporter superfamily. Lipid exporter (TC 3.A.1.106) family. As to quaternary structure, homodimer.

It localises to the cell inner membrane. The enzyme catalyses ATP + H2O + lipid A-core oligosaccharideSide 1 = ADP + phosphate + lipid A-core oligosaccharideSide 2.. Involved in lipopolysaccharide (LPS) biosynthesis. Translocates lipid A-core from the inner to the outer leaflet of the inner membrane. Transmembrane domains (TMD) form a pore in the inner membrane and the ATP-binding domain (NBD) is responsible for energy generation. This is ATP-dependent lipid A-core flippase from Nitrosococcus oceani (strain ATCC 19707 / BCRC 17464 / JCM 30415 / NCIMB 11848 / C-107).